The sequence spans 74 residues: Kappa-stichotoxin-Hmg1a (74 aa).

An N-terminal signal peptide occupies residues 1–22 (MKSQMIAAVLLIAFCLCVVVTA). Residues 23 to 39 (RMELQDVEDMENGFQKR) constitute a propeptide that is removed on maturation. A ShKT domain is found at 42-74 (CKDLIPVSECTDIRCRTSMKYRLNLCRKTCGSC). Disulfide bonds link cysteine 42–cysteine 74, cysteine 51–cysteine 67, and cysteine 56–cysteine 71.

This sequence belongs to the sea anemone type 1 potassium channel toxin family. Type 1a subfamily.

The protein localises to the secreted. It is found in the nematocyst. Potently blocks the voltage-gated potassium channel Kv1.1/KCNA1 (Ki=75 pM), KcsA (Ki~1 nM) and moderately blocks Kv1.2/KCNA2 (Ki=2.5 nM) and Kv1.3/KCNA3 (Ki=3.1 nM). Also facilitates acetylcholine release at the avian neuromuscular junction. Blockade and dissociation rate are sensitive to voltage. This Heteractis magnifica (Magnificent sea anemone) protein is Kappa-stichotoxin-Hmg1a.